A 486-amino-acid polypeptide reads, in one-letter code: Glutamyl-tRNA(Gln) amidotransferase subunit A (486 aa).

Active-site charge relay system residues include Lys76 and Ser151. Ser175 serves as the catalytic Acyl-ester intermediate.

This sequence belongs to the amidase family. GatA subfamily. Heterotrimer of A, B and C subunits.

The enzyme catalyses L-glutamyl-tRNA(Gln) + L-glutamine + ATP + H2O = L-glutaminyl-tRNA(Gln) + L-glutamate + ADP + phosphate + H(+). Functionally, allows the formation of correctly charged Gln-tRNA(Gln) through the transamidation of misacylated Glu-tRNA(Gln) in organisms which lack glutaminyl-tRNA synthetase. The reaction takes place in the presence of glutamine and ATP through an activated gamma-phospho-Glu-tRNA(Gln). This chain is Glutamyl-tRNA(Gln) amidotransferase subunit A, found in Nitrosomonas europaea (strain ATCC 19718 / CIP 103999 / KCTC 2705 / NBRC 14298).